Here is a 160-residue protein sequence, read N- to C-terminus: Variant surface antigen C (160 aa).

An N-terminal signal peptide occupies residues 1-29 (MKKSIFSKKLLVSFGSLVALASIPLIAIS). C30 is lipidated: N-palmitoyl cysteine. The S-diacylglycerol cysteine moiety is linked to residue C30. A disordered region spans residues 32–160 (QTNTDKSQQP…SSESGSQKTT (129 aa)). 2 stretches are compositionally biased toward low complexity: residues 38–54 (SQQP…QSGT) and 62–87 (SGTS…QTET). Tandem repeats lie at residues 86-97 (ETAPKSPESGSQ), 98-109 (EATPKSPESGSQ), 110-121 (EATPKSPESGSQ), 122-133 (EAAPKSSESGSQ), 134-145 (EAAPKSSESGSQ), and 146-157 (EAAPKSSESGSQ). Residues 86 to 157 (ETAPKSPESG…APKSSESGSQ (72 aa)) form a 6 X 12 AA tandem repeats region. The segment covering 93–160 (ESGSQEATPK…SSESGSQKTT (68 aa)) has biased composition (polar residues).

Its subcellular location is the cell membrane. In terms of biological role, responsible for the antigenic diversity for host adaptation. The polypeptide is Variant surface antigen C (vlpC) (Mesomycoplasma hyorhinis (Mycoplasma hyorhinis)).